The following is a 305-amino-acid chain: UDP-3-O-acyl-N-acetylglucosamine deacetylase (305 aa).

Zn(2+) contacts are provided by His-79, His-238, and Asp-242. His-265 (proton donor) is an active-site residue.

This sequence belongs to the LpxC family. Zn(2+) is required as a cofactor.

It catalyses the reaction a UDP-3-O-[(3R)-3-hydroxyacyl]-N-acetyl-alpha-D-glucosamine + H2O = a UDP-3-O-[(3R)-3-hydroxyacyl]-alpha-D-glucosamine + acetate. The protein operates within glycolipid biosynthesis; lipid IV(A) biosynthesis; lipid IV(A) from (3R)-3-hydroxytetradecanoyl-[acyl-carrier-protein] and UDP-N-acetyl-alpha-D-glucosamine: step 2/6. Catalyzes the hydrolysis of UDP-3-O-myristoyl-N-acetylglucosamine to form UDP-3-O-myristoylglucosamine and acetate, the committed step in lipid A biosynthesis. The sequence is that of UDP-3-O-acyl-N-acetylglucosamine deacetylase from Pasteurella multocida (strain Pm70).